Reading from the N-terminus, the 112-residue chain is uncharacterized protein (112 aa).

The protein to M.jannaschii MJ1244 and M.thermoautotrophicum MTH1110.

This is an uncharacterized protein from Methanocaldococcus jannaschii (strain ATCC 43067 / DSM 2661 / JAL-1 / JCM 10045 / NBRC 100440) (Methanococcus jannaschii).